Reading from the N-terminus, the 44-residue chain is Pandinin-1 (44 aa).

In terms of tissue distribution, expressed by the venom gland.

It is found in the secreted. Its subcellular location is the target cell membrane. Disrupts cell membranes through formation of pores. Strong antimicrobial activity against Gram-positive bacteria B.subtilis, S.epidermidis, E.faecalis and S.aureus. Less active against Gram-negative bacteria P.aeruginosa and E.coli. Has no antifungal or hemolytic activity. In Pandinus imperator (Emperor scorpion), this protein is Pandinin-1.